We begin with the raw amino-acid sequence, 231 residues long: Cytochrome c oxidase subunit 2 (231 aa).

Topologically, residues 1–14 (MAHPAQLGLQNATS) are mitochondrial intermembrane. The helical transmembrane segment at 15 to 45 (PIMEELIAFHDHALMIIFLISSLVLYIISLM) threads the bilayer. At 46-59 (LTTKLTHTSTMNAQ) the chain is on the mitochondrial matrix side. The helical transmembrane segment at 60 to 87 (EIEMVWTILPAIILIMIALPSLRILYMT) threads the bilayer. Residues 88 to 231 (DEFNKPYLTL…WASYLYIVSL (144 aa)) are Mitochondrial intermembrane-facing. Cu cation-binding residues include H161, C196, E198, C200, H204, and M207. E198 contributes to the Mg(2+) binding site.

Belongs to the cytochrome c oxidase subunit 2 family. In terms of assembly, component of the cytochrome c oxidase (complex IV, CIV), a multisubunit enzyme composed of 14 subunits. The complex is composed of a catalytic core of 3 subunits MT-CO1, MT-CO2 and MT-CO3, encoded in the mitochondrial DNA, and 11 supernumerary subunits COX4I, COX5A, COX5B, COX6A, COX6B, COX6C, COX7A, COX7B, COX7C, COX8 and NDUFA4, which are encoded in the nuclear genome. The complex exists as a monomer or a dimer and forms supercomplexes (SCs) in the inner mitochondrial membrane with NADH-ubiquinone oxidoreductase (complex I, CI) and ubiquinol-cytochrome c oxidoreductase (cytochrome b-c1 complex, complex III, CIII), resulting in different assemblies (supercomplex SCI(1)III(2)IV(1) and megacomplex MCI(2)III(2)IV(2)). Found in a complex with TMEM177, COA6, COX18, COX20, SCO1 and SCO2. Interacts with TMEM177 in a COX20-dependent manner. Interacts with COX20. Interacts with COX16. Cu cation serves as cofactor.

It is found in the mitochondrion inner membrane. It catalyses the reaction 4 Fe(II)-[cytochrome c] + O2 + 8 H(+)(in) = 4 Fe(III)-[cytochrome c] + 2 H2O + 4 H(+)(out). Component of the cytochrome c oxidase, the last enzyme in the mitochondrial electron transport chain which drives oxidative phosphorylation. The respiratory chain contains 3 multisubunit complexes succinate dehydrogenase (complex II, CII), ubiquinol-cytochrome c oxidoreductase (cytochrome b-c1 complex, complex III, CIII) and cytochrome c oxidase (complex IV, CIV), that cooperate to transfer electrons derived from NADH and succinate to molecular oxygen, creating an electrochemical gradient over the inner membrane that drives transmembrane transport and the ATP synthase. Cytochrome c oxidase is the component of the respiratory chain that catalyzes the reduction of oxygen to water. Electrons originating from reduced cytochrome c in the intermembrane space (IMS) are transferred via the dinuclear copper A center (CU(A)) of subunit 2 and heme A of subunit 1 to the active site in subunit 1, a binuclear center (BNC) formed by heme A3 and copper B (CU(B)). The BNC reduces molecular oxygen to 2 water molecules using 4 electrons from cytochrome c in the IMS and 4 protons from the mitochondrial matrix. This Lagothrix lagotricha (Brown woolly monkey) protein is Cytochrome c oxidase subunit 2 (MT-CO2).